The following is a 732-amino-acid chain: MSETFPETNTPVQTPSTESFVNKMNAGDKTIGNNIFSQDSDSNQQSSHQEPLSPPNPSPTPEKRQLDDEVDNSIEPESKKQKVEEETEASQTGVIQTEVSETVPEIESSVNKDSEPVNGVSEESENTNNEQEKPQEEAPEENPQEEVPEAKPQEEASGENPQEIPNDKPQDDEPDIQEVDPPKPVVPVFTEPAPKPPQEPDMNNLPENPIPQHQAKFVLNTIKAVKRNREAVPFLHPVDTVKLNVPFYYNYIPRPMDLSTIERKINLKAYEDVSQVVDDFNLMVKNCKKFNGEAAGISKMATNIQAQFEKLMVKVPPKELPAGTNVAEATSVATSPTTNKRKSVAESSSSHQHRDSVAAARPKRTIHPPKSKELPYETKPKNKKVAAELRFCNQTIKELMSKKHYNYNFPFLAPVDTVALNIPNYNEIVKQPMDLGTIQSKLANNEYENADDFEKDVRLVFKNCYLFNPEGTDVNMMGHRLEAVFDKKWANKPVPEPTPQNSDVSDREYSSEEEDNVEISEAMLSEIPAIQVMENQIIRMRKELDELKKEHLKKLREQQAARKKKKQQKGKRRAPKAKHTKDTQHQVQAPPEPPKLTPPQPVVTYEMKKQVSEMVPNLSDKKLNALIKIIQDDVQISNDDEVELDMDQLEDRTVLKLYDFLFGDKALKNSAGKKKKPVANNNLDELAHLRSQLALFDEGVNGQQGSDNGFMKVVNQEESSEDEASSESSEEE.

Over residues Met1 to Asn22 the composition is skewed to polar residues. Disordered stretches follow at residues Met1–Glu207, Thr324–Pro380, Asn491–Val517, Arg556–Gln600, and Val700–Glu732. Low complexity predominate over residues Ser37 to Pro51. Residues Ala89 to Ser100 are compositionally biased toward polar residues. The segment covering Glu137–Val147 has biased composition (acidic residues). The Bromo 1 domain occupies Pro206 to Val315. Positions Ala327–Thr338 are enriched in polar residues. Residues Lys370–Pro380 are compositionally biased toward basic and acidic residues. Positions Lys383–Lys492 constitute a Bromo 2 domain. A coiled-coil region spans residues Ala529–Lys569. A compositionally biased stretch (basic residues) spans Ala561–His579. Pro residues predominate over residues Pro590–Gln600. Residues Pro593–Gly672 enclose the NET domain. A compositionally biased stretch (acidic residues) spans Glu718 to Glu732.

The protein belongs to the BET family.

The protein resides in the nucleus. Its function is as follows. Transcription factor involved in the expression of a broad class of genes including snRNAs. Required for sporulation and DNA-damage repair. Prevents the spreading of SIR silencing at telomeres and protects histone H4, but not H3, from deacetylation. The sequence is that of Bromodomain-containing factor 1 (BDF1) from Candida albicans (strain SC5314 / ATCC MYA-2876) (Yeast).